Consider the following 153-residue polypeptide: Large ribosomal subunit protein bL9 (153 aa).

This sequence belongs to the bacterial ribosomal protein bL9 family.

Its function is as follows. Binds to the 23S rRNA. This Synechococcus sp. (strain JA-3-3Ab) (Cyanobacteria bacterium Yellowstone A-Prime) protein is Large ribosomal subunit protein bL9.